The primary structure comprises 100 residues: Small ribosomal subunit protein uS14c (100 aa).

The protein belongs to the universal ribosomal protein uS14 family. As to quaternary structure, part of the 30S ribosomal subunit.

It is found in the plastid. The protein resides in the chloroplast. In terms of biological role, binds 16S rRNA, required for the assembly of 30S particles. In Cyanidioschyzon merolae (strain NIES-3377 / 10D) (Unicellular red alga), this protein is Small ribosomal subunit protein uS14c.